The chain runs to 472 residues: MERKTVLVIADLGGCPPHMFYKSAAEKYNLVSFIPRPFAITASHAALIEKYSVAVIKDKDYFKSLADFEHPDSIYWAHEDHDKPEEEVVEEIVKVAGMFAVDAITTNNELFIAPMAKACERLGLRGAGVQAAENARDKNKMRAAFNRAGVKSIKNKRVTTLEDFRAALQEIGTPLILKPTYLASSIGVTLIKEMETAEAEFNRVNEYLKSINVPKAVTFEAPFIAEEFLQGEYDDWYETSGYSDYISIEGIMADGEYFPVAIHDKTPQIGFTETSHITPSILDDDAKRKIVEAAKKANEGLGLENCATHTEIKLMKNREAGLIESAARFAGWNMIPNIKKVFGVDMAQLLLDVLCFGKEADLPKGLLEQEPCYVADCHLYPQHFKENGQLPETAVDFVIESIDIPDGVLKGDTEIVSFSAAEAGTSVDLRLFEAFNSIAAFELKGSNSGDVAESIKQIQQQAKLTAKYALPV.

Position 109 (Glu-109) interacts with Mg(2+). 2 residues coordinate ATP: Lys-138 and Lys-178. An ATP-grasp domain is found at Arg-142–Cys-355. Residue Leu-182 participates in Mg(2+) binding. ATP-binding positions include Ser-184 to Ser-185, Glu-226 to Leu-229, and Gln-268. Substrate contacts are provided by residues Glu-273 and His-309 to Glu-311. Mg(2+)-binding residues include Glu-311 and Glu-324. Arg-328–Gly-331 serves as a coordination point for substrate.

In terms of assembly, monomer or homodimer. It depends on Mg(2+) as a cofactor.

The enzyme catalyses L-anticapsin + L-alanine + ATP = bacilysin + ADP + phosphate + H(+). It participates in antibiotic biosynthesis; bacilysin biosynthesis. In terms of biological role, part of the bacABCDEFG operon responsible for the biosynthesis of bacilysin, an irreversible inactivator of the glutaminase domain of glucosamine synthetase. Catalyzes the formation of alpha-dipeptides from various L-amino acids in the presence of ATP. In vivo catalyzes the ligation of L-alanine and L-anticapsin (epoxycyclohexanonyl-Ala) to produce the final bacilysin antibiotic (L-Ala-L-4S-cyclohexenonyl-Ala dipeptide). In Bacillus subtilis, this protein is Alanine--anticapsin ligase.